Here is a 559-residue protein sequence, read N- to C-terminus: Alpha-(1,6)-fucosyltransferase (559 aa).

At 1 to 4 the chain is on the cytoplasmic side; that stretch reads MLKC. The chain crosses the membrane as a helical; Signal-anchor for type II membrane protein span at residues 5–24; sequence IAAVGTVVWMTMFLFLYSQL. The Lumenal segment spans residues 25 to 559; that stretch reads SNNQSGGDSI…RKFKFEALLD (535 aa). Asparagine 27 carries an N-linked (GlcNAc...) asparagine glycan. The segment covering 63–74 has biased composition (basic and acidic residues); sequence QERNDQHKKIME. The interval 63 to 90 is disordered; it reads QERNDQHKKIMEQSHQLPPNPENPSLPK. Over residues 80–90 the composition is skewed to pro residues; it reads PPNPENPSLPK. A glycan (N-linked (GlcNAc...) asparagine) is linked at asparagine 134. 3 disulfides stabilise this stretch: cysteine 188/cysteine 251, cysteine 196/cysteine 214, and cysteine 202/cysteine 206. One can recognise a GT23 domain in the interval 190–480; the sequence is EAKTLVCNLD…ADDGSKFHSL (291 aa). The interval 351-352 is important for donor substrate binding; sequence RR. Cysteine 452 and cysteine 459 form a disulfide bridge. An SH3 domain is found at 489 to 550; that stretch reads QQAHEVIVIE…PSYKVVNDWR (62 aa).

This sequence belongs to the glycosyltransferase 23 family. The cofactor is Mn(2+). Requires Mg(2+) as cofactor.

It is found in the golgi apparatus. Its subcellular location is the golgi stack membrane. It carries out the reaction N(4)-{beta-D-GlcNAc-(1-&gt;2)-alpha-D-Man-(1-&gt;3)-[beta-D-GlcNAc-(1-&gt;2)-alpha-D-Man-(1-&gt;6)]-beta-D-Man-(1-&gt;4)-beta-D-GlcNAc-(1-&gt;4)-beta-D-GlcNAc}-L-asparaginyl-[protein] + GDP-beta-L-fucose = an N(4)-{beta-D-GlcNAc-(1-&gt;2)-alpha-D-Man-(1-&gt;3)-[beta-D-GlcNAc-(1-&gt;2)-alpha-D-Man-(1-&gt;6)]-beta-D-Man-(1-&gt;4)-beta-D-GlcNAc-(1-&gt;4)-[alpha-L-Fuc-(1-&gt;6)]-beta-D-GlcNAc}-L-asparaginyl-[protein] + GDP + H(+). Its pathway is protein modification; protein glycosylation. Its activity is regulated as follows. Inhibited by Fe(3+), Ni(2+) and Cu(2+). Its function is as follows. Catalyzes the addition of fucose in alpha 1-6 linkage to the first GlcNAc residue, next to the peptide chains in N-glycans. The addition is prevented if the GlcNAc residue is already fucosylated. Involved in susceptibility to the nematotoxic C.cinerea galectin Cgl2, likely by contributing to the synthesis of core alpha-1,6-fucosylated N-glycans to which Cgl2 binds. In Caenorhabditis elegans, this protein is Alpha-(1,6)-fucosyltransferase.